The sequence spans 368 residues: Endophilin-A2 (368 aa).

Residues 1–21 are membrane-binding amphipathic helix; it reads MSVAGLKKQFYKASQLVSEKV. Residues 18-249 form the BAR domain; sequence SEKVGGAEGT…LKRRMREASS (232 aa). The interval 60-87 is required for dimerization upon membrane association; it reads PNPASRAKLTMLNTVSKIRGQVKNPGYP. Positions 181 to 250 form a coiled coil; that stretch reads EELRQAMEKF…KRRMREASSR (70 aa). Residues 218-254 are interaction with ARC; it reads LVDAQLDYHRQAVQILDELADKLKRRMREASSRPKRE. The tract at residues 243 to 308 is disordered; that stretch reads RMREASSRPK…PSRSMPPLDQ (66 aa). Residues 245–263 are compositionally biased toward basic and acidic residues; the sequence is REASSRPKREYKPKPRELL. Phosphoserine occurs at positions 288 and 292. Phosphothreonine is present on Thr298. The 60-residue stretch at 306–365 folds into the SH3 domain; sequence LDQPSCKALYDFEPENDGELGFHEGDIITLTNQIDENWYEGMLDGQSGFFPLSYVEVLVP. Tyr315 bears the Phosphotyrosine mark.

This sequence belongs to the endophilin family. As to quaternary structure, interacts with ARC, SYNJ1 and DNM1. Interacts with PDCD6IP. Interacts with BIN2.

The protein resides in the cytoplasm. It localises to the early endosome membrane. Its subcellular location is the cell projection. The protein localises to the podosome. Its function is as follows. Implicated in endocytosis. May recruit other proteins to membranes with high curvature. The polypeptide is Endophilin-A2 (Bos taurus (Bovine)).